The sequence spans 293 residues: Protease HtpX (293 aa).

The next 2 membrane-spanning stretches (helical) occupy residues 4–24 (IALF…VLSL) and 34–54 (GLMI…LLMS). A Zn(2+)-binding site is contributed by His139. Glu140 is an active-site residue. His143 is a Zn(2+) binding site. 2 helical membrane-spanning segments follow: residues 158–178 (IVNT…AGFL) and 193–213 (MVYF…ASII). Glu222 lines the Zn(2+) pocket.

The protein belongs to the peptidase M48B family. The cofactor is Zn(2+).

The protein localises to the cell inner membrane. The protein is Protease HtpX of Yersinia enterocolitica serotype O:8 / biotype 1B (strain NCTC 13174 / 8081).